We begin with the raw amino-acid sequence, 264 residues long: ATP synthase subunit a (264 aa).

The next 5 helical transmembrane spans lie at 39 to 59 (LDTLIISVVLGALFILIFYIV), 97 to 117 (VAPLALTIFIWVFLMNFMDLV), 139 to 159 (TADPTLTFAMSITVFVLVIFY), 205 to 225 (LFGNLFAGELIFILIALLPWW), and 239 to 259 (LLVITVQAFIFMMLTVVYISL).

This sequence belongs to the ATPase A chain family. As to quaternary structure, F-type ATPases have 2 components, CF(1) - the catalytic core - and CF(0) - the membrane proton channel. CF(1) has five subunits: alpha(3), beta(3), gamma(1), delta(1), epsilon(1). CF(0) has three main subunits: a(1), b(2) and c(9-12). The alpha and beta chains form an alternating ring which encloses part of the gamma chain. CF(1) is attached to CF(0) by a central stalk formed by the gamma and epsilon chains, while a peripheral stalk is formed by the delta and b chains.

The protein localises to the cell inner membrane. Its function is as follows. Key component of the proton channel; it plays a direct role in the translocation of protons across the membrane. This chain is ATP synthase subunit a, found in Coxiella burnetii (strain RSA 331 / Henzerling II).